The primary structure comprises 446 residues: tRNA-2-methylthio-N(6)-dimethylallyladenosine synthase (446 aa).

One can recognise an MTTase N-terminal domain in the interval 3–119 (KKIFIKTFGC…INEAILNHLK (117 aa)). Positions 12, 48, 82, 158, 162, and 165 each coordinate [4Fe-4S] cluster. Residues 144 to 374 (KDSKVSSFLT…QEKLFNNQIK (231 aa)) form the Radical SAM core domain. Residues 377–439 (KSLENKILNV…QNSLFGKLTE (63 aa)) enclose the TRAM domain.

The protein belongs to the methylthiotransferase family. MiaB subfamily. In terms of assembly, monomer. [4Fe-4S] cluster serves as cofactor.

Its subcellular location is the cytoplasm. The catalysed reaction is N(6)-dimethylallyladenosine(37) in tRNA + (sulfur carrier)-SH + AH2 + 2 S-adenosyl-L-methionine = 2-methylsulfanyl-N(6)-dimethylallyladenosine(37) in tRNA + (sulfur carrier)-H + 5'-deoxyadenosine + L-methionine + A + S-adenosyl-L-homocysteine + 2 H(+). Its function is as follows. Catalyzes the methylthiolation of N6-(dimethylallyl)adenosine (i(6)A), leading to the formation of 2-methylthio-N6-(dimethylallyl)adenosine (ms(2)i(6)A) at position 37 in tRNAs that read codons beginning with uridine. In Pelagibacter ubique (strain HTCC1062), this protein is tRNA-2-methylthio-N(6)-dimethylallyladenosine synthase.